The chain runs to 326 residues: Ribosome biogenesis protein BRX1 homolog (326 aa).

Basic and acidic residues predominate over residues 1–17; that stretch reads MVKPSKILEKIKKRTEP. The interval 1–66 is disordered; sequence MVKPSKILEK…EENKNIEENK (66 aa). Residues 22 to 57 show a composition bias toward acidic residues; it reads VVEEESDEEIIEQEGSEEEEEIVEEESEEEEEEVEE. One can recognise a Brix domain in the interval 75 to 268; it reads KRVLFTSTRG…IDKIFSDGFG (194 aa).

The protein belongs to the BRX1 family.

It is found in the nucleus. The protein resides in the nucleolus. Its function is as follows. Required for biogenesis of the 60S ribosomal subunit. The sequence is that of Ribosome biogenesis protein BRX1 homolog (bxdc2) from Dictyostelium discoideum (Social amoeba).